The following is a 512-amino-acid chain: Histidine ammonia-lyase (512 aa).

Residues 143–145 (ASG) constitute a cross-link (5-imidazolinone (Ala-Gly)). The residue at position 144 (Ser144) is a 2,3-didehydroalanine (Ser).

The protein belongs to the PAL/histidase family. Post-translationally, contains an active site 4-methylidene-imidazol-5-one (MIO), which is formed autocatalytically by cyclization and dehydration of residues Ala-Ser-Gly.

It is found in the cytoplasm. The catalysed reaction is L-histidine = trans-urocanate + NH4(+). It participates in amino-acid degradation; L-histidine degradation into L-glutamate; N-formimidoyl-L-glutamate from L-histidine: step 1/3. This chain is Histidine ammonia-lyase, found in Ruegeria pomeroyi (strain ATCC 700808 / DSM 15171 / DSS-3) (Silicibacter pomeroyi).